Here is a 369-residue protein sequence, read N- to C-terminus: Dihydroorotate dehydrogenase (quinone) (369 aa).

FMN is bound by residues 66-70 (AGFDK) and T90. K70 provides a ligand contact to substrate. A substrate-binding site is contributed by 115 to 119 (NRMGF). FMN contacts are provided by N143 and N176. Residue N176 participates in substrate binding. S179 serves as the catalytic Nucleophile. N181 lines the substrate pocket. Residues K217 and T245 each coordinate FMN. 246-247 (NT) is a substrate binding site. Residues G271, G300, and 321–322 (YT) contribute to the FMN site.

Belongs to the dihydroorotate dehydrogenase family. Type 2 subfamily. Monomer. The cofactor is FMN.

The protein resides in the cell membrane. It catalyses the reaction (S)-dihydroorotate + a quinone = orotate + a quinol. The protein operates within pyrimidine metabolism; UMP biosynthesis via de novo pathway; orotate from (S)-dihydroorotate (quinone route): step 1/1. In terms of biological role, catalyzes the conversion of dihydroorotate to orotate with quinone as electron acceptor. This Nocardia farcinica (strain IFM 10152) protein is Dihydroorotate dehydrogenase (quinone).